A 245-amino-acid chain; its full sequence is Large ribosomal subunit protein uL3 (245 aa).

An N5-methylglutamine modification is found at glutamine 151. The disordered stretch occupies residues 214 to 245 (KDAPQPGKYRLANSAAPQPAEADAASDTGAQA). A compositionally biased stretch (low complexity) spans 225–245 (ANSAAPQPAEADAASDTGAQA).

This sequence belongs to the universal ribosomal protein uL3 family. Part of the 50S ribosomal subunit. Forms a cluster with proteins L14 and L19. Post-translationally, methylated by PrmB.

Its function is as follows. One of the primary rRNA binding proteins, it binds directly near the 3'-end of the 23S rRNA, where it nucleates assembly of the 50S subunit. The chain is Large ribosomal subunit protein uL3 from Methylocella silvestris (strain DSM 15510 / CIP 108128 / LMG 27833 / NCIMB 13906 / BL2).